The chain runs to 841 residues: Translation initiation factor IF-2 (841 aa).

A disordered region spans residues 94–258; sequence QRSPEEIEAE…HGFQSPTGPV (165 aa). The span at 96–136 shows a compositional bias: basic and acidic residues; that stretch reads SPEEIEAERKRELEERRAVENAARQKAEEEAKRRAEEEARR. Residues 137–173 show a composition bias toward low complexity; sequence QPAAAQPAGTEAVAAPVAPVEAVREAAPVAAAPAPAA. 3 stretches are compositionally biased toward basic and acidic residues: residues 174–194, 200–217, and 225–234; these read DARK…DNNR, DGER…EKAP, and TTDEESDGFR. Positions 235 to 248 are enriched in basic residues; the sequence is RGGRGKAKLKKRNA. The 170-residue stretch at 341-510 folds into the tr-type G domain; sequence SRAPVVTVMG…LLQAEVLELK (170 aa). The segment at 350-357 is G1; the sequence is GHVDHGKT. 350 to 357 provides a ligand contact to GTP; it reads GHVDHGKT. Positions 375–379 are G2; sequence GITQH. The G3 stretch occupies residues 396–399; the sequence is DTPG. GTP-binding positions include 396–400 and 450–453; these read DTPGH and NKID. The tract at residues 450–453 is G4; it reads NKID. A G5 region spans residues 486 to 488; sequence SAK.

The protein belongs to the TRAFAC class translation factor GTPase superfamily. Classic translation factor GTPase family. IF-2 subfamily.

The protein resides in the cytoplasm. Its function is as follows. One of the essential components for the initiation of protein synthesis. Protects formylmethionyl-tRNA from spontaneous hydrolysis and promotes its binding to the 30S ribosomal subunits. Also involved in the hydrolysis of GTP during the formation of the 70S ribosomal complex. This is Translation initiation factor IF-2 from Pseudomonas fluorescens (strain SBW25).